Here is a 250-residue protein sequence, read N- to C-terminus: 2,3-bisphosphoglycerate-dependent phosphoglycerate mutase (250 aa).

Residues 10–17, 23–24, arginine 62, 89–92, lysine 100, 116–117, and 185–186 each bind substrate; these read RHGESQWN, TG, ERHY, RR, and GN. Catalysis depends on histidine 11, which acts as the Tele-phosphohistidine intermediate. The Proton donor/acceptor role is filled by glutamate 89.

It belongs to the phosphoglycerate mutase family. BPG-dependent PGAM subfamily. As to quaternary structure, homodimer.

It carries out the reaction (2R)-2-phosphoglycerate = (2R)-3-phosphoglycerate. The protein operates within carbohydrate degradation; glycolysis; pyruvate from D-glyceraldehyde 3-phosphate: step 3/5. In terms of biological role, catalyzes the interconversion of 2-phosphoglycerate and 3-phosphoglycerate. The protein is 2,3-bisphosphoglycerate-dependent phosphoglycerate mutase of Serratia proteamaculans (strain 568).